The following is an 810-amino-acid chain: Cell division control protein 48 homolog E (810 aa).

S2 is modified (N-acetylserine). Residue S41 is modified to Phosphoserine. Residues 248 to 255 and 521 to 528 contribute to the ATP site; these read GPPGSGKT and GPPGCGKT.

This sequence belongs to the AAA ATPase family.

The protein localises to the nucleus. The protein resides in the cytoplasm. It is found in the cytoskeleton. It localises to the phragmoplast. In terms of biological role, probably functions in cell division and growth processes. Interacts with certain SNAREs as part of specialized membrane fusion events where vesicles from the same organelle fuse (homotypic fusion). The chain is Cell division control protein 48 homolog E (CDC48E) from Arabidopsis thaliana (Mouse-ear cress).